The primary structure comprises 157 residues: Cuticle protein 19 (157 aa).

Repeat copies occupy residues 11-14, 18-21, 24-27, 29-32, 39-42, and 47-50. Positions 56–127 constitute a Chitin-binding type R&amp;R domain; sequence YPKYAFEYGV…SGPSAHPAPA (72 aa). Copy 7 of the repeat occupies 141–144; the sequence is AAPA.

Component of the cuticle of migratory locust which contains more than 100 different structural proteins. The protein is Cuticle protein 19 of Locusta migratoria (Migratory locust).